The chain runs to 576 residues: Type II restriction enzyme BsuRI (576 aa).

Monomer. It depends on Mg(2+) as a cofactor.

It carries out the reaction Endonucleolytic cleavage of DNA to give specific double-stranded fragments with terminal 5'-phosphates.. A P subtype restriction enzyme that recognizes the double-stranded sequence 5'-GGCC-3' and cleaves after G-2. The protein is Type II restriction enzyme BsuRI (hsdRR) of Bacillus subtilis.